The following is a 148-amino-acid chain: Augurin (148 aa).

The N-terminal stretch at 1–31 is a signal peptide; it reads MSTSSARPAVLALAGLALLLLLCLGPDGISG. 2 propeptides span residues 32 to 70 and 133 to 148; these read NKLK…RAKR and SRES…YNDY.

This sequence belongs to the augurin family. Expressed in the intermediate lobe of pituitary, glomerular layer of adrenal cortex, choroid plexus and atrioventricular node of the heart. Expressed in the brain with high expression in the choroid plexus and the epithelial lining of the central canal and expression in the gray matter of the spinal cord (at protein level).

Its subcellular location is the secreted. It localises to the cytoplasm. The protein resides in the apical cell membrane. Functionally, probable hormone that may attenuate cell proliferation and induce senescence of oligodendrocyte and neural precursor cells in the central nervous system. ECRG4-induced senescence is characterized by G1 arrest, RB1 dephosphorylation and accelerated CCND1 and CCND3 proteasomal degradation. The polypeptide is Augurin (Mus musculus (Mouse)).